The primary structure comprises 330 residues: Olfactory receptor 1P1 (330 aa).

The Extracellular portion of the chain corresponds to 1–39 (MGLTQDFFPPTSELLEGGNQTSTFEFLLWGLSDQPQQQH). Asn-19 carries N-linked (GlcNAc...) asparagine glycosylation. The helical transmembrane segment at 40-60 (IFFLLFLWMYVVTVAGNLLIV) threads the bilayer. The Cytoplasmic segment spans residues 61-71 (LAIGTDTHLHT). A helical transmembrane segment spans residues 72–92 (PMYFFLASLSCADIFSTSTTV). The Extracellular segment spans residues 93–111 (PKALVNIQTQSRSISYAGC). A disulfide bond links Cys-111 and Cys-192. The chain crosses the membrane as a helical span at residues 112–132 (LAQLYFFLTFGDMDIFLPATM). At 133–137 (AYDRY) the chain is on the cytoplasmic side. A helical transmembrane segment spans residues 138-158 (VAICHLLHYMMIMSLHRCAFL). At 159 to 209 (VTACWTLTSLLAMTRTFLIFRLSLCSKILPGFFCDLGPLMKVSCSDAQVNE) the chain is on the extracellular side. Residues 210-230 (LVLLFLGGAVILIPFMLILVS) traverse the membrane as a helical segment. Topologically, residues 231–257 (YIRIVSAILRAPSAQGRRKAFSTCDSH) are cytoplasmic. The helical transmembrane segment at 258–278 (LVVVALFFGTVIRAYLCPSSS) threads the bilayer. Over 279–286 (SSNSVKED) the chain is Extracellular. Residues 287–307 (TAAAVMYTVVTPLLNPFIYSM) form a helical membrane-spanning segment. The Cytoplasmic portion of the chain corresponds to 308–330 (RNKDMKAAVVRLLKGRVSFSQGQ).

The protein belongs to the G-protein coupled receptor 1 family.

The protein resides in the cell membrane. In terms of biological role, odorant receptor. The protein is Olfactory receptor 1P1 (OR1P1) of Homo sapiens (Human).